The chain runs to 691 residues: Elongation factor G (691 aa).

The tr-type G domain maps to 8–282; that stretch reads DRVRNIGIAA…AVVDYLPAPI (275 aa). GTP is bound by residues 17–24, 81–85, and 135–138; these read AHIDAGKT, DTPGH, and NKMD.

Belongs to the TRAFAC class translation factor GTPase superfamily. Classic translation factor GTPase family. EF-G/EF-2 subfamily.

It localises to the cytoplasm. Functionally, catalyzes the GTP-dependent ribosomal translocation step during translation elongation. During this step, the ribosome changes from the pre-translocational (PRE) to the post-translocational (POST) state as the newly formed A-site-bound peptidyl-tRNA and P-site-bound deacylated tRNA move to the P and E sites, respectively. Catalyzes the coordinated movement of the two tRNA molecules, the mRNA and conformational changes in the ribosome. In Synechococcus sp. (strain RCC307), this protein is Elongation factor G.